Here is a 148-residue protein sequence, read N- to C-terminus: 3-dehydroquinate dehydratase (148 aa).

The active-site Proton acceptor is the tyrosine 23. Substrate is bound by residues asparagine 75, histidine 81, and aspartate 88. Residue histidine 101 is the Proton donor of the active site. Substrate-binding positions include 102–103 and arginine 112; that span reads LS.

It belongs to the type-II 3-dehydroquinase family. As to quaternary structure, homododecamer.

It carries out the reaction 3-dehydroquinate = 3-dehydroshikimate + H2O. Its pathway is metabolic intermediate biosynthesis; chorismate biosynthesis; chorismate from D-erythrose 4-phosphate and phosphoenolpyruvate: step 3/7. Functionally, catalyzes a trans-dehydration via an enolate intermediate. The protein is 3-dehydroquinate dehydratase of Xanthomonas oryzae pv. oryzae (strain MAFF 311018).